The sequence spans 475 residues: Mitochondrial adenyl nucleotide antiporter SLC25A24 (475 aa).

The tract at residues 1–173 (MLRWLRAFVL…RFWKHSTGID (173 aa)) is regulatory N-terminal domain. Residues 1–197 (MLRWLRAFVL…EKKSGQWWRQ (197 aa)) are Mitochondrial intermembrane-facing. 4 EF-hand domains span residues 19 to 54 (EPPT…LGIP), 55 to 88 (LGQD…KDHE), 86 to 121 (DHEK…LGLH), and 122 to 157 (ISEK…NPVT). Ca(2+)-binding residues include D32, N34, D36, V38, E43, D68, N70, D72, K74, E79, D99, N101, D103, K105, E110, D135, D137, T139, T141, and E146. Positions 159–168 (IEEIIRFWKH) are linker region. A C-terminal transmembrane transporter domain region spans residues 174 to 475 (IGDSLTIPDE…MKQTLGVAQK (302 aa)). Solcar repeat units lie at residues 192-276 (GQWW…YKKL), 284-369 (LGTF…LKSY), and 381-469 (PGVM…MKQT). Residues 198–215 (LLAGGVAGAVSRTSTAPL) form a helical membrane-spanning segment. At 216–250 (DRLKVMMQVHGSKSMNIFGGFRQMVKEGGIRSLWR) the chain is on the mitochondrial matrix side. Residues 251–270 (GNGTNVIKIAPETAVKFWAY) form a helical membrane-spanning segment. The Mitochondrial intermembrane portion of the chain corresponds to 271–293 (EQYKKLLTEEGQKLGTFERFISG). The helical transmembrane segment at 294–307 (SMAGATAQTFIYPM) threads the bilayer. Topologically, residues 308 to 343 (EVLKTRLAVAKTGQYSGIYGCAKKILKHEGFGAFYK) are mitochondrial matrix. K318 carries the N6-acetyllysine; alternate modification. Residue K318 is modified to N6-succinyllysine; alternate. Position 334 is an N6-acetyllysine (K334). The chain crosses the membrane as a helical span at residues 344–363 (GYIPNLLGIIPYAGIDLAVY). Residues 364-386 (ELLKSYWLDNFAKDSVNPGVMVL) lie on the Mitochondrial intermembrane side of the membrane. Residues 387–404 (LSCGALSSTCGQLASYPL) traverse the membrane as a helical segment. Topologically, residues 405–443 (ALVRTRMQAQATVEGAPQLSMVGLFQRIVSKEGVSGLYR) are mitochondrial matrix. K435 carries the N6-acetyllysine; alternate modification. Position 435 is an N6-succinyllysine; alternate (K435). Residues 444–463 (GITPNFMKVLPAVGISYVVY) traverse the membrane as a helical segment. Over 464-475 (ENMKQTLGVAQK) the chain is Mitochondrial intermembrane.

This sequence belongs to the mitochondrial carrier (TC 2.A.29) family. In terms of assembly, monomer.

It localises to the mitochondrion inner membrane. The enzyme catalyses Mg(2+)(out) + phosphate(in) + ATP(out) = Mg(2+)(in) + phosphate(out) + ATP(in). It carries out the reaction ADP(out) + phosphate(in) + H(+)(out) = ADP(in) + phosphate(out) + H(+)(in). It catalyses the reaction AMP(out) + phosphate(in) = AMP(in) + phosphate(out). The catalysed reaction is phosphate(in) + ATP(out) + 2 H(+)(out) = phosphate(out) + ATP(in) + 2 H(+)(in). The enzyme catalyses dADP(in) + ADP(out) = dADP(out) + ADP(in). It carries out the reaction Mg(2+)(in) + ADP(out) + ATP(in) + H(+)(out) = Mg(2+)(out) + ADP(in) + ATP(out) + H(+)(in). It catalyses the reaction ADP(out) + diphosphate(in) = ADP(in) + diphosphate(out). The catalysed reaction is dAMP(in) + ADP(out) + H(+)(out) = dAMP(out) + ADP(in) + H(+)(in). The enzyme catalyses 3'-AMP(in) + ADP(out) + H(+)(out) = 3'-AMP(out) + ADP(in) + H(+)(in). It carries out the reaction dAMP(out) + phosphate(in) = dAMP(in) + phosphate(out). It catalyses the reaction 3'-AMP(out) + phosphate(in) = 3'-AMP(in) + phosphate(out). The catalysed reaction is dADP(out) + phosphate(in) + H(+)(out) = dADP(in) + phosphate(out) + H(+)(in). Its activity is regulated as follows. Activated by an increase in cytosolic calcium levels that induce a conformational change of the N-terminal regulatory domain, uncapping the channel and allowing transport. Inhibited by bathophenanthroline, mersalyl, p-hydroxymercuribenzoate, bromcresol purple and tannic acid. Functionally, electroneutral antiporter that mediates the transport of adenyl nucleotides through the inner mitochondrial membrane. Originally identified as an ATP-magnesium/inorganic phosphate antiporter, it also acts as a broad specificity adenyl nucleotide antiporter. By regulating the mitochondrial matrix adenyl nucleotide pool could adapt to changing cellular energetic demands and indirectly regulate adenyl nucleotide-dependent metabolic pathways. In vitro, a low activity is also observed with guanyl and pyrimidine nucleotides. May play a role in protecting cells against oxidative stress-induced cell death, by buffering calcium levels in the mitochondrial matrix through the formation of calcium-phosphate precipitates. This Mus musculus (Mouse) protein is Mitochondrial adenyl nucleotide antiporter SLC25A24.